A 243-amino-acid chain; its full sequence is CR(VI) reductase (243 aa).

Belongs to the flavin oxidoreductase frp family. It depends on FMN as a cofactor.

The protein is CR(VI) reductase (chrR) of Pseudomonas sp. (strain G-1).